Here is a 178-residue protein sequence, read N- to C-terminus: ATP synthase subunit delta (178 aa).

The protein belongs to the ATPase delta chain family. F-type ATPases have 2 components, F(1) - the catalytic core - and F(0) - the membrane proton channel. F(1) has five subunits: alpha(3), beta(3), gamma(1), delta(1), epsilon(1). F(0) has three main subunits: a(1), b(2) and c(10-14). The alpha and beta chains form an alternating ring which encloses part of the gamma chain. F(1) is attached to F(0) by a central stalk formed by the gamma and epsilon chains, while a peripheral stalk is formed by the delta and b chains.

Its subcellular location is the cell membrane. Its function is as follows. F(1)F(0) ATP synthase produces ATP from ADP in the presence of a proton or sodium gradient. F-type ATPases consist of two structural domains, F(1) containing the extramembraneous catalytic core and F(0) containing the membrane proton channel, linked together by a central stalk and a peripheral stalk. During catalysis, ATP synthesis in the catalytic domain of F(1) is coupled via a rotary mechanism of the central stalk subunits to proton translocation. Functionally, this protein is part of the stalk that links CF(0) to CF(1). It either transmits conformational changes from CF(0) to CF(1) or is implicated in proton conduction. This Buchnera aphidicola subsp. Baizongia pistaciae (strain Bp) protein is ATP synthase subunit delta.